A 1427-amino-acid polypeptide reads, in one-letter code: Lysophospholipase NTE1 (1427 aa).

At 1 to 60 (MDSLHVSSTSVLVDVVEAVETATSLVVDTAEAVATEQATPTAVISNALARSAYAAHTSLS) the chain is on the cytoplasmic side. A helical membrane pass occupies residues 61-81 (YLAWAFGLWFLRLIGWVCYGI). The Lumenal portion of the chain corresponds to 82–96 (PTYVLGLLGRTINIS). Residues 97–117 (LQFSSLLLILIALVTVVVAVV) form a helical membrane-spanning segment. Residues 118-1427 (RYKYLTVYSR…KRTIARRNSI (1310 aa)) lie on the Cytoplasmic side of the membrane. The segment covering 281-296 (PMTSASDVPNMSLSSD) has biased composition (polar residues). Positions 281 to 315 (PMTSASDVPNMSLSSDGSDDLQKGEPQFGEPRLSE) are disordered. A nucleoside 3',5'-cyclic phosphate is bound by residues 615-735 (LMAA…LTKV) and 731-870 (SLTK…VASR). Residues 787–807 (GIVGGESGDAKDGKSHRKNLT) are disordered. The PNPLA domain occupies 1124 to 1288 (LVLGGGGARG…VDNLPVSEMK (165 aa)). Positions 1128–1133 (GGGARG) match the GXGXXG motif. Residues 1155–1159 (GTSIG) carry the GXSXG motif. The Nucleophile role is filled by Ser1157. Asp1275 acts as the Proton acceptor in catalysis. The short motif at 1275–1277 (DGG) is the DGA/G element.

This sequence belongs to the NTE family.

It localises to the endoplasmic reticulum membrane. It carries out the reaction a 1-acyl-sn-glycero-3-phosphocholine + H2O = sn-glycerol 3-phosphocholine + a fatty acid + H(+). With respect to regulation, inhibited by organophosphorus esters. Its function is as follows. Intracellular phospholipase B that catalyzes the double deacylation of phosphatidylcholine (PC) to glycerophosphocholine (GroPCho). Plays an important role in membrane lipid homeostasis. Responsible for the rapid PC turnover in response to inositol, elevated temperatures, or when choline is present in the growth medium. In Yarrowia lipolytica (strain CLIB 122 / E 150) (Yeast), this protein is Lysophospholipase NTE1 (NTE1).